The following is a 689-amino-acid chain: Elongation factor G (689 aa).

Positions 9–283 constitute a tr-type G domain; it reads AKFRNIGIMA…AIIEFMPSPL (275 aa). Residues 18 to 25, 82 to 86, and 136 to 139 contribute to the GTP site; these read AHIDAGKT, DTPGH, and NKMD.

The protein belongs to the TRAFAC class translation factor GTPase superfamily. Classic translation factor GTPase family. EF-G/EF-2 subfamily.

The protein localises to the cytoplasm. Catalyzes the GTP-dependent ribosomal translocation step during translation elongation. During this step, the ribosome changes from the pre-translocational (PRE) to the post-translocational (POST) state as the newly formed A-site-bound peptidyl-tRNA and P-site-bound deacylated tRNA move to the P and E sites, respectively. Catalyzes the coordinated movement of the two tRNA molecules, the mRNA and conformational changes in the ribosome. The chain is Elongation factor G from Clostridium botulinum (strain Okra / Type B1).